Here is a 306-residue protein sequence, read N- to C-terminus: Non-specific ribonucleoside hydrolase RihC (306 aa).

The active site involves His235.

This sequence belongs to the IUNH family. RihC subfamily.

Its function is as follows. Hydrolyzes both purine and pyrimidine ribonucleosides with a broad-substrate specificity. In Salmonella heidelberg (strain SL476), this protein is Non-specific ribonucleoside hydrolase RihC.